A 362-amino-acid polypeptide reads, in one-letter code: Transcriptional repressor PifC (362 aa).

In terms of biological role, transcription repression of its own gene by binding to the PIF operator (pifO) and replication initiation from the primary origin (ori-1). Transcriptional repressor of the pifA and pifB. This chain is Transcriptional repressor PifC (pifC), found in Escherichia coli (strain K12).